The following is a 298-amino-acid chain: Protoheme IX farnesyltransferase (298 aa).

A run of 9 helical transmembrane segments spans residues 28–48, 50–70, 95–117, 121–138, 149–169, 176–196, 222–242, 243–263, and 274–294; these read VVAL…EELV, LKVL…AAAI, LSPA…TLYA, PLTA…AVVY, NIVI…TSVT, AVLL…ALAV, CIFL…LIGM, TGMI…AYAW, and AFNM…ILLV.

It belongs to the UbiA prenyltransferase family. Protoheme IX farnesyltransferase subfamily.

It localises to the cell inner membrane. It carries out the reaction heme b + (2E,6E)-farnesyl diphosphate + H2O = Fe(II)-heme o + diphosphate. The protein operates within porphyrin-containing compound metabolism; heme O biosynthesis; heme O from protoheme: step 1/1. Functionally, converts heme B (protoheme IX) to heme O by substitution of the vinyl group on carbon 2 of heme B porphyrin ring with a hydroxyethyl farnesyl side group. The polypeptide is Protoheme IX farnesyltransferase (Idiomarina loihiensis (strain ATCC BAA-735 / DSM 15497 / L2-TR)).